A 281-amino-acid chain; its full sequence is Pantothenate synthetase (281 aa).

Residue 29–36 (MGYLHEGH) coordinates ATP. Catalysis depends on His36, which acts as the Proton donor. Residue Gln60 coordinates (R)-pantoate. Beta-alanine is bound at residue Gln60. 146-149 (GQKD) is an ATP binding site. A (R)-pantoate-binding site is contributed by Gln152. ATP contacts are provided by residues Val175 and 183 to 186 (MSSR).

Belongs to the pantothenate synthetase family. As to quaternary structure, homodimer.

The protein resides in the cytoplasm. The enzyme catalyses (R)-pantoate + beta-alanine + ATP = (R)-pantothenate + AMP + diphosphate + H(+). The protein operates within cofactor biosynthesis; (R)-pantothenate biosynthesis; (R)-pantothenate from (R)-pantoate and beta-alanine: step 1/1. Functionally, catalyzes the condensation of pantoate with beta-alanine in an ATP-dependent reaction via a pantoyl-adenylate intermediate. In Pseudothermotoga lettingae (strain ATCC BAA-301 / DSM 14385 / NBRC 107922 / TMO) (Thermotoga lettingae), this protein is Pantothenate synthetase.